A 181-amino-acid chain; its full sequence is MSSLIASRRYAWALLSAAEEGQFLDQATDALNSIKETLANSRDLVHVLRSPLINGDKKTHILEEVFKEIAGEKVMIFLRLLAHKKRAGQLPEIIGEYQKLLDEKNGVINVSINSAVMLSDEQAKDLVNKLANYTGKKVRAKMKLEEALLGGVTVKIEDTIIDGSVRHQLQMMKKFLLAGKL.

Belongs to the ATPase delta chain family. As to quaternary structure, F-type ATPases have 2 components, F(1) - the catalytic core - and F(0) - the membrane proton channel. F(1) has five subunits: alpha(3), beta(3), gamma(1), delta(1), epsilon(1). F(0) has three main subunits: a(1), b(2) and c(10-14). The alpha and beta chains form an alternating ring which encloses part of the gamma chain. F(1) is attached to F(0) by a central stalk formed by the gamma and epsilon chains, while a peripheral stalk is formed by the delta and b chains.

The protein resides in the cell inner membrane. F(1)F(0) ATP synthase produces ATP from ADP in the presence of a proton or sodium gradient. F-type ATPases consist of two structural domains, F(1) containing the extramembraneous catalytic core and F(0) containing the membrane proton channel, linked together by a central stalk and a peripheral stalk. During catalysis, ATP synthesis in the catalytic domain of F(1) is coupled via a rotary mechanism of the central stalk subunits to proton translocation. Its function is as follows. This protein is part of the stalk that links CF(0) to CF(1). It either transmits conformational changes from CF(0) to CF(1) or is implicated in proton conduction. This Chlorobium limicola (strain DSM 245 / NBRC 103803 / 6330) protein is ATP synthase subunit delta.